Reading from the N-terminus, the 329-residue chain is Phenylalanine--tRNA ligase alpha subunit (329 aa).

A Mg(2+)-binding site is contributed by E254.

The protein belongs to the class-II aminoacyl-tRNA synthetase family. Phe-tRNA synthetase alpha subunit type 1 subfamily. As to quaternary structure, tetramer of two alpha and two beta subunits. The cofactor is Mg(2+).

The protein resides in the cytoplasm. It catalyses the reaction tRNA(Phe) + L-phenylalanine + ATP = L-phenylalanyl-tRNA(Phe) + AMP + diphosphate + H(+). This chain is Phenylalanine--tRNA ligase alpha subunit, found in Histophilus somni (strain 129Pt) (Haemophilus somnus).